The chain runs to 582 residues: MVFFPEAMPLVTLSERMVPQVNTSPFAPAQSSSPLPSNSCREYSLPSHPSTHNSSVAYVDSQDNKPPLVSTLHFSLAPSLSPSSAQSHNTALITEPLTSFIGGTSQYPSASFSTSQHPSQVYNDGSTLNSNNTTQQLNNNNGFQPPPQNPGISKSRIAQYHQPSQTYDDTVDSSFYDWYKAGAQHNLAPPQSSHTEASQGYMYSTNTAHDATDIPSSFNFYNTQASTAPNPQEINYQWSHEYRPHTQYQNNLLRAQPNVNCENFPTTVPNYPFQQPSYNPNALVPSYTTLVSQLPPSPCLTVSSGPLSTASSIPSNCSCPSVKSSGPSYHAEQEVNVNSYNGGIPSTSYNDTPQQSVTGSYNSGETMSTYLNQTNTSGRSPNSMEATEQIGTIGTDGSMKRRKRRQPSNRKTSVPRSPGGKSFVCPECSKKFKRSEHLRRHIRSLHTSEKPFVCICGKRFSRRDNLRQHERLHVNASPRLACFFQPSGYYSSGAPGAPVQPQKPIEDLNKIPINQGMDSSQIENTNLMLSSQRPLSQQIVPEIAAYPNSIRPELLSKLPVQTPNQKMPLMNPMHQYQPYPSS.

Disordered stretches follow at residues 24 to 55, 107 to 154, 347 to 366, and 375 to 422; these read SPFA…HNSS, YPSA…GISK, TSYN…SGET, and NTSG…GGKS. The span at 107–125 shows a compositional bias: polar residues; it reads YPSASFSTSQHPSQVYNDG. Over residues 126–143 the composition is skewed to low complexity; sequence STLNSNNTTQQLNNNNGF. Residues 375–392 are compositionally biased toward polar residues; the sequence is NTSGRSPNSMEATEQIGT. The C2H2-type 1 zinc-finger motif lies at 423 to 446; the sequence is FVCPECSKKFKRSEHLRRHIRSLH. A C2H2-type 2; atypical zinc finger spans residues 452–473; it reads FVCICGKRFSRRDNLRQHERLH.

It is found in the nucleus. Transcription factor that globally supports gene expression in response to hydrogen peroxide. The chain is Hydrogen peroxide stress regulator 1 (hsr1) from Schizosaccharomyces pombe (strain 972 / ATCC 24843) (Fission yeast).